A 975-amino-acid chain; its full sequence is MLQPRESDVPVLFVVFIVLPVIAYFLLGRWHDAVSKKARVSVLAQRAAEETFKVETMATPDVILPGPSLRPMPYMRSAPSARPEYHECATCHGPAKTRCSRCKSVRYCSGKCQIIHWRQGHKQTCQQWNGFGTSSSGGLPPTENTEQMPFLSNLNSPLRGSDVHLHDMDFDTMSEPSFVTTDSYNLDTSPFLSDRSNMNKPNQFLHTSENGAAIGSYEKNDYSIDGEVPSSEILSGNKGLNNSSGSGENCGNRDVIYPLNSVVHQPNNYAPEIRKRPKASITVYESDKGVYLTSDMISSGEGPYASAAESLQRSNSSGNVTGKGNMIHKKPPYPSGKVSSSQKSQEKVLTSHQYDGHEKNPHNKNEQRSTKTAVSTNSSLQGCNGISKAGASKVEALKKPSKFLKTSLVGLINDNKRSKVLFPYEDLVKFFQYEVRGISPRGLFNCGNSCYANAVLQCLMCTKPLMIYLLLRLHSKDCCSKNWCLMCELEQYASTLRESGGPVSPSRILSNLRNIGCRLGGGSQEDAHEFLRHLVMSMQGACLDGLGGEKQVEASLQETTLIQQMFGGRLKSKVKCLRCYHESERYENIMDLTLEIHGWVESLQDALTQFTAPEDLDGENMYKCGRCSAYVKARKQLSVHEVPNILTVVLKRFQTGKYGKINKCVTFPDMLDMVPFVTGAGDNPPLYFLYAVVVHVDTENASFSGHYISYVKDMQGTWLRIDDSEVQAVSLNQVMSEGAYMLFYMRSFPRPPKIYIEKGLSSVPTCSKRHSSKSSKGSKQDLNHTESLFASSDQTYGIYDFRPDNGYIQDQHAALRTRNFYHTDDAFADSISTDFSDATSSEWSLFTSSDESSFTTESTRDSFSVVDYGDNAGLDPISSIFGPYYAQDHPPGSFASCTRLSPSNPQTRYFQENTGFVSDSSMPAHLPGNVHRGRYPDRACSSSAEPPASANPRSVYGRYGLSREGFVQTSGFCQM.

8 residues coordinate Zn(2+): cysteine 88, cysteine 91, cysteine 99, cysteine 102, cysteine 108, cysteine 112, histidine 121, and cysteine 125. The MYND-type zinc finger occupies 88–125; the sequence is CATCHGPAKTRCSRCKSVRYCSGKCQIIHWRQGHKQTC. The disordered stretch occupies residues 301 to 378; it reads EGPYASAAES…STKTAVSTNS (78 aa). Over residues 309 to 322 the composition is skewed to polar residues; the sequence is ESLQRSNSSGNVTG. Residues 354-369 are compositionally biased toward basic and acidic residues; that stretch reads YDGHEKNPHNKNEQRS. Residues 441 to 747 enclose the USP domain; that stretch reads RGLFNCGNSC…GAYMLFYMRS (307 aa). Cysteine 450 acts as the Nucleophile in catalysis. The active-site Proton acceptor is histidine 706. The segment at 764–783 is disordered; sequence PTCSKRHSSKSSKGSKQDLN.

This sequence belongs to the peptidase C19 family. As to expression, highly expressed in young panicles. Expressed in roots, leaf blades, leaf sheaths and stems. Expressed at low levels in brown grains.

The protein localises to the cytoplasm. It is found in the nucleus. The catalysed reaction is Thiol-dependent hydrolysis of ester, thioester, amide, peptide and isopeptide bonds formed by the C-terminal Gly of ubiquitin (a 76-residue protein attached to proteins as an intracellular targeting signal).. In terms of biological role, recognizes and hydrolyzes the peptide bond at the C-terminal Gly of ubiquitin. Involved in the processing of poly-ubiquitin precursors as well as that of ubiquitinated proteins. Involved in the regulation of grain size. Acts as positive regulator of grain width and size by influencing cell proliferation. Functions partially antagonistically with GW2 in the regulation of grain width. Possesses deubiquitinating enzyme activity in vitro. In Oryza sativa subsp. japonica (Rice), this protein is Ubiquitin C-terminal hydrolase 15.